Reading from the N-terminus, the 174-residue chain is Large ribosomal subunit protein uL13 (174 aa).

Disordered stretches follow at residues 1 to 22 and 153 to 174; these read MAFPDTDVSPPRGGPSSPAKSP and GETHPHSAQKPQVLKTQPLEVK.

It belongs to the universal ribosomal protein uL13 family. As to quaternary structure, part of the 50S ribosomal subunit. Contacts proteins L3 and L20.

Functionally, this protein is one of the early assembly proteins of the 50S ribosomal subunit. Binds to the 23S rRNA. The chain is Large ribosomal subunit protein uL13 (rplM) from Deinococcus radiodurans (strain ATCC 13939 / DSM 20539 / JCM 16871 / CCUG 27074 / LMG 4051 / NBRC 15346 / NCIMB 9279 / VKM B-1422 / R1).